The sequence spans 119 residues: Ribonuclease P protein component (119 aa).

This sequence belongs to the RnpA family. As to quaternary structure, consists of a catalytic RNA component (M1 or rnpB) and a protein subunit.

The enzyme catalyses Endonucleolytic cleavage of RNA, removing 5'-extranucleotides from tRNA precursor.. In terms of biological role, RNaseP catalyzes the removal of the 5'-leader sequence from pre-tRNA to produce the mature 5'-terminus. It can also cleave other RNA substrates such as 4.5S RNA. The protein component plays an auxiliary but essential role in vivo by binding to the 5'-leader sequence and broadening the substrate specificity of the ribozyme. The sequence is that of Ribonuclease P protein component from Streptococcus mutans serotype c (strain ATCC 700610 / UA159).